A 146-amino-acid polypeptide reads, in one-letter code: Hemoglobin subunit beta (146 aa).

Val-1 is modified (N-acetylvaline). A Globin domain is found at 2–146 (HLSGEEKAAV…VANALAHKYH (145 aa)). Residue Thr-12 is modified to Phosphothreonine. Ser-44 carries the post-translational modification Phosphoserine. Lys-59 carries the post-translational modification N6-acetyllysine. Position 63 (His-63) interacts with heme b. The residue at position 82 (Lys-82) is an N6-acetyllysine. His-92 is a heme b binding site. Cys-93 is subject to S-nitrosocysteine. Lys-144 is subject to N6-acetyllysine.

Belongs to the globin family. In terms of assembly, heterotetramer of two alpha chains and two beta chains. As to expression, red blood cells.

Its function is as follows. Involved in oxygen transport from the lung to the various peripheral tissues. The chain is Hemoglobin subunit beta (HBB) from Pteropus alecto (Black flying fox).